A 140-amino-acid polypeptide reads, in one-letter code: ATP synthase epsilon chain (140 aa).

It belongs to the ATPase epsilon chain family. As to quaternary structure, F-type ATPases have 2 components, CF(1) - the catalytic core - and CF(0) - the membrane proton channel. CF(1) has five subunits: alpha(3), beta(3), gamma(1), delta(1), epsilon(1). CF(0) has three main subunits: a, b and c.

It is found in the cell inner membrane. Functionally, produces ATP from ADP in the presence of a proton gradient across the membrane. The sequence is that of ATP synthase epsilon chain from Legionella pneumophila (strain Paris).